Consider the following 425-residue polypeptide: Monoacylglycerol lipase ABHD2 (425 aa).

Residues 1–9 (MNAMMETSE) lie on the Cytoplasmic side of the membrane. A helical; Signal-anchor for type II membrane protein membrane pass occupies residues 10–30 (LPAVFDGVKLAAVAAVLYVIV). The Extracellular portion of the chain corresponds to 31-425 (RCLNLKSPTA…DTELVEADLE (395 aa)). One can recognise an AB hydrolase-1 domain in the interval 128-382 (MVICPGIANH…HGGHLGFFEG (255 aa)). N-linked (GlcNAc...) asparagine glycosylation occurs at N136. The active-site Nucleophile is S207. Residues D345 and H376 each act as charge relay system in the active site. N410 is a glycosylation site (N-linked (GlcNAc...) asparagine).

It belongs to the AB hydrolase superfamily. AB hydrolase 4 family.

The protein resides in the cell membrane. The catalysed reaction is Hydrolyzes glycerol monoesters of long-chain fatty acids.. The enzyme catalyses an acetyl ester + H2O = an aliphatic alcohol + acetate + H(+). It carries out the reaction a triacylglycerol + H2O = a diacylglycerol + a fatty acid + H(+). It catalyses the reaction 2-(5Z,8Z,11Z,14Z-eicosatetraenoyl)-glycerol + H2O = glycerol + (5Z,8Z,11Z,14Z)-eicosatetraenoate + H(+). The catalysed reaction is a butanoate ester + H2O = an aliphatic alcohol + butanoate + H(+). The enzyme catalyses hexadecanoate ester + H2O = an aliphatic alcohol + hexadecanoate + H(+). Acylglycerol lipase activity is activated upon binding to progesterone. Progesterone-dependent acylglycerol lipase that catalyzes hydrolysis of endocannabinoid arachidonoylglycerol (AG) from cell membrane. Acts as a progesterone receptor: progesterone-binding activates the acylglycerol lipase activity, mediating degradation of 1-arachidonoylglycerol (1AG) and 2-arachidonoylglycerol (2AG) to glycerol and arachidonic acid (AA). Also displays an ester hydrolase activity against acetyl ester, butanoate ester and hexadecanoate ester. Plays a key role in sperm capacitation in response to progesterone by mediating degradation of 2AG, an inhibitor of the sperm calcium channel CatSper, leading to calcium influx via CatSper and sperm activation. May also play a role in smooth muscle cells migration. The sequence is that of Monoacylglycerol lipase ABHD2 (ABHD2) from Bos taurus (Bovine).